The chain runs to 557 residues: Dihydroxy-acid dehydratase (557 aa).

D78 is a Mg(2+) binding site. C119 is a binding site for [2Fe-2S] cluster. Mg(2+) is bound by residues D120 and K121. N6-carboxylysine is present on K121. Position 191 (C191) interacts with [2Fe-2S] cluster. E442 contacts Mg(2+). S468 functions as the Proton acceptor in the catalytic mechanism.

The protein belongs to the IlvD/Edd family. In terms of assembly, homodimer. The cofactor is [2Fe-2S] cluster. Mg(2+) is required as a cofactor.

It carries out the reaction (2R)-2,3-dihydroxy-3-methylbutanoate = 3-methyl-2-oxobutanoate + H2O. The catalysed reaction is (2R,3R)-2,3-dihydroxy-3-methylpentanoate = (S)-3-methyl-2-oxopentanoate + H2O. It participates in amino-acid biosynthesis; L-isoleucine biosynthesis; L-isoleucine from 2-oxobutanoate: step 3/4. It functions in the pathway amino-acid biosynthesis; L-valine biosynthesis; L-valine from pyruvate: step 3/4. Functions in the biosynthesis of branched-chain amino acids. Catalyzes the dehydration of (2R,3R)-2,3-dihydroxy-3-methylpentanoate (2,3-dihydroxy-3-methylvalerate) into 2-oxo-3-methylpentanoate (2-oxo-3-methylvalerate) and of (2R)-2,3-dihydroxy-3-methylbutanoate (2,3-dihydroxyisovalerate) into 2-oxo-3-methylbutanoate (2-oxoisovalerate), the penultimate precursor to L-isoleucine and L-valine, respectively. The chain is Dihydroxy-acid dehydratase from Lachnoclostridium phytofermentans (strain ATCC 700394 / DSM 18823 / ISDg) (Clostridium phytofermentans).